The chain runs to 238 residues: E3 ubiquitin-protein ligase ZNRF2 (238 aa).

The interval 1 to 137 (MGAKQSGPAA…AGGGPGGPRL (137 aa)) is disordered. Glycine 2 carries the N-myristoyl glycine lipid modification. Phosphoserine occurs at positions 20, 24, 75, 82, 107, 110, 141, 147, and 189. The segment covering 35 to 77 (GARAARFAAPVSGAQQPSASAGAAAAAAAAASAPAAPRSRSLG) has biased composition (low complexity). An RING-type; atypical zinc finger spans residues 195–236 (CAICLEELQQGDTIARLPCLCIYHKGCIDEWFEVNRSCPEHP).

In terms of assembly, interacts with UBE2N. Interacts with ZNRF1. Interacts (when phosphorylated) with YWHAE. In terms of processing, phosphorylated; leading to binding to YWHAE. Phosphorylated by MTOR at Ser-147 and dephosphorylated by PP6C. Ser-147 phosphorylation stimulates vesicle-to-cytosol translocation. Expressed primarily in the nervous system. Expression is more intense in the granular cell layer of hippocampus, Purkinje cell layer of the cerebellum and the granular cell layer of the olfactory bulb. Detected in sensory neurons but not expressed in sympatic or enteric neurons. Expressed in testis, adipose tissue, columnar epithelial cells of the gut.

It is found in the endosome membrane. The protein localises to the lysosome membrane. Its subcellular location is the presynaptic cell membrane. It localises to the cytoplasm. The enzyme catalyses S-ubiquitinyl-[E2 ubiquitin-conjugating enzyme]-L-cysteine + [acceptor protein]-L-lysine = [E2 ubiquitin-conjugating enzyme]-L-cysteine + N(6)-ubiquitinyl-[acceptor protein]-L-lysine.. Its pathway is protein modification; protein ubiquitination. E3 ubiquitin-protein ligase that plays a role in the establishment and maintenance of neuronal transmission and plasticity. Ubiquitinates the Na(+)/K(+) ATPase alpha-1 subunit/ATP1A1 and thereby influences its endocytosis and/or degradation. Also acts as a positive regulator of mTORC1 activation by amino acids, which functions upstream of the V-ATPase and of Rag-GTPases. In turn, phosphorylation by mTOR leads to its inhibition via targeting to the cytosol allowing a self-regulating feedback mechanism. This is E3 ubiquitin-protein ligase ZNRF2 (Znrf2) from Mus musculus (Mouse).